A 279-amino-acid chain; its full sequence is Probable cyclic nucleotide phosphodiesterase Psyc_2036 (279 aa).

Fe cation-binding residues include Asp23, His25, Asp70, Asn100, His179, His218, and His220. Residues His25, Asp70, and 100–101 each bind AMP; that span reads NH. An AMP-binding site is contributed by His220.

Belongs to the cyclic nucleotide phosphodiesterase class-III family. Fe(2+) is required as a cofactor.

This chain is Probable cyclic nucleotide phosphodiesterase Psyc_2036, found in Psychrobacter arcticus (strain DSM 17307 / VKM B-2377 / 273-4).